We begin with the raw amino-acid sequence, 425 residues long: Light-independent protochlorophyllide reductase subunit N (425 aa).

Residues C17, C42, and C103 each coordinate [4Fe-4S] cluster.

Belongs to the BchN/ChlN family. As to quaternary structure, protochlorophyllide reductase is composed of three subunits; ChlL, ChlN and ChlB. Forms a heterotetramer of two ChlB and two ChlN subunits. It depends on [4Fe-4S] cluster as a cofactor.

It catalyses the reaction chlorophyllide a + oxidized 2[4Fe-4S]-[ferredoxin] + 2 ADP + 2 phosphate = protochlorophyllide a + reduced 2[4Fe-4S]-[ferredoxin] + 2 ATP + 2 H2O. The protein operates within porphyrin-containing compound metabolism; chlorophyll biosynthesis (light-independent). Component of the dark-operative protochlorophyllide reductase (DPOR) that uses Mg-ATP and reduced ferredoxin to reduce ring D of protochlorophyllide (Pchlide) to form chlorophyllide a (Chlide). This reaction is light-independent. The NB-protein (ChlN-ChlB) is the catalytic component of the complex. The chain is Light-independent protochlorophyllide reductase subunit N from Parasynechococcus marenigrum (strain WH8102).